The primary structure comprises 121 residues: MAQRVTFRRRNPYNTRSNKIKVVKTPGGILRAQHVKKLATRPKCGDCGSALQGISTLRPRQYATVSKTHKTVSRAYGGSRCANCVKERIIRAFLIEEQKIVKKVVKEQTEAAKKSEKKAKK.

The protein belongs to the eukaryotic ribosomal protein eL34 family. As to quaternary structure, component of the large ribosomal subunit (LSU). Mature yeast ribosomes consist of a small (40S) and a large (60S) subunit. The 40S small subunit contains 1 molecule of ribosomal RNA (18S rRNA) and 33 different proteins (encoded by 57 genes). The large 60S subunit contains 3 rRNA molecules (25S, 5.8S and 5S rRNA) and 46 different proteins (encoded by 81 genes).

The protein localises to the cytoplasm. In terms of biological role, component of the ribosome, a large ribonucleoprotein complex responsible for the synthesis of proteins in the cell. The small ribosomal subunit (SSU) binds messenger RNAs (mRNAs) and translates the encoded message by selecting cognate aminoacyl-transfer RNA (tRNA) molecules. The large subunit (LSU) contains the ribosomal catalytic site termed the peptidyl transferase center (PTC), which catalyzes the formation of peptide bonds, thereby polymerizing the amino acids delivered by tRNAs into a polypeptide chain. The nascent polypeptides leave the ribosome through a tunnel in the LSU and interact with protein factors that function in enzymatic processing, targeting, and the membrane insertion of nascent chains at the exit of the ribosomal tunnel. The sequence is that of Large ribosomal subunit protein eL34A from Saccharomyces cerevisiae (strain ATCC 204508 / S288c) (Baker's yeast).